Consider the following 310-residue polypeptide: Glutaminase 1 (310 aa).

Substrate is bound by residues S66, N117, E161, N168, Y192, Y244, and V262. K294 carries the N6-acetyllysine modification.

Belongs to the glutaminase family. Homotetramer.

The catalysed reaction is L-glutamine + H2O = L-glutamate + NH4(+). The polypeptide is Glutaminase 1 (Escherichia coli (strain K12)).